The chain runs to 456 residues: MNYPAEPFRIKSVETVSMIPRDERLKKMQEAGYNTFLLNSKDIYIDLLTDSGTNAMSDKQWAGMMMGDEAYAGSENFYHLERTVQELFGFKHIVPTHQGRGAENLLSQLAIKPGQYVAGNMYFTTTRYHQEKNGAVFVDIVRDEAHDAGLNIAFKGDIDLKKLQKLIDEKGAENIAYICLAVTVNLAGGQPVSMANMRAVRELTAAHGIKVFYDATRCVENAYFIKEQEQGFENKSIAEIVHEMFSYADGCTMSGKKDCLVNIGGFLCMNDDEMFSSAKELVVVYEGMPSYGGLAGRDMEAMAIGLREAMQYEYIEHRVKQVRYLGDKLKAAGVPIVEPVGGHAVFLDARRFCEHLTQDEFPAQSLAASIYVETGVRSMERGIISAGRNNVTGEHHRPKLETVRLTIPRRVYTYAHMDVVADGIIKLYQHKEDIRGLKFIYEPKQLRFFTARFDYI.

An N6-(pyridoxal phosphate)lysine modification is found at Lys-257.

Belongs to the beta-eliminating lyase family. Homotetramer. Pyridoxal 5'-phosphate is required as a cofactor.

The enzyme catalyses L-tyrosine + H2O = phenol + pyruvate + NH4(+). The sequence is that of Tyrosine phenol-lyase (tpl) from Citrobacter intermedius (Escherichia intermedia).